A 142-amino-acid chain; its full sequence is Ribosome-binding factor A (142 aa).

A disordered region spans residues 123 to 142 (VQRDLDSAPEDDEPETGTGH). Residues 129 to 142 (SAPEDDEPETGTGH) show a composition bias toward acidic residues.

Belongs to the RbfA family. As to quaternary structure, monomer. Binds 30S ribosomal subunits, but not 50S ribosomal subunits or 70S ribosomes.

It is found in the cytoplasm. One of several proteins that assist in the late maturation steps of the functional core of the 30S ribosomal subunit. Associates with free 30S ribosomal subunits (but not with 30S subunits that are part of 70S ribosomes or polysomes). Required for efficient processing of 16S rRNA. May interact with the 5'-terminal helix region of 16S rRNA. The polypeptide is Ribosome-binding factor A (Methylobacterium radiotolerans (strain ATCC 27329 / DSM 1819 / JCM 2831 / NBRC 15690 / NCIMB 10815 / 0-1)).